Here is a 242-residue protein sequence, read N- to C-terminus: Tryptophan synthase alpha chain (242 aa).

Active-site proton acceptor residues include E31 and D42.

It belongs to the TrpA family. As to quaternary structure, tetramer of two alpha and two beta chains.

It carries out the reaction (1S,2R)-1-C-(indol-3-yl)glycerol 3-phosphate + L-serine = D-glyceraldehyde 3-phosphate + L-tryptophan + H2O. Its pathway is amino-acid biosynthesis; L-tryptophan biosynthesis; L-tryptophan from chorismate: step 5/5. The alpha subunit is responsible for the aldol cleavage of indoleglycerol phosphate to indole and glyceraldehyde 3-phosphate. This is Tryptophan synthase alpha chain from Staphylococcus aureus (strain MRSA252).